Consider the following 1527-residue polypeptide: DNA-directed RNA polymerase subunit beta'' (1527 aa).

Zn(2+) contacts are provided by Cys-220, Cys-296, Cys-303, and Cys-306. 2 stretches are compositionally biased toward basic and acidic residues: residues 644-661 and 671-681; these read RTQEEEYRTREEEYRTRE and PENKYRTREGE. Disordered regions lie at residues 644 to 681 and 712 to 793; these read RTQEEEYRTREEEYRTREEDSEDEYESPENKYRTREGE and YRTL…KKEG. Composition is skewed to acidic residues over residues 737–755 and 763–786; these read GEYEILEEESEEEYGSSED and TLEEDSEEDSEEDSEDEYGSPEED.

Belongs to the RNA polymerase beta' chain family. RpoC2 subfamily. In plastids the minimal PEP RNA polymerase catalytic core is composed of four subunits: alpha, beta, beta', and beta''. When a (nuclear-encoded) sigma factor is associated with the core the holoenzyme is formed, which can initiate transcription. It depends on Zn(2+) as a cofactor.

The protein localises to the plastid. The protein resides in the chloroplast. It carries out the reaction RNA(n) + a ribonucleoside 5'-triphosphate = RNA(n+1) + diphosphate. Its function is as follows. DNA-dependent RNA polymerase catalyzes the transcription of DNA into RNA using the four ribonucleoside triphosphates as substrates. In Zea mays (Maize), this protein is DNA-directed RNA polymerase subunit beta''.